Consider the following 361-residue polypeptide: Free fatty acid receptor 4 (361 aa).

Residues Met-1–Thr-45 lie on the Extracellular side of the membrane. Residue Asn-21 is glycosylated (N-linked (GlcNAc...) asparagine). The helical transmembrane segment at Val-46–Ala-66 threads the bilayer. The Cytoplasmic portion of the chain corresponds to Arg-67–Leu-77. The chain crosses the membrane as a helical span at residues Val-78–Val-98. Residues Arg-99 to His-112 lie on the Extracellular side of the membrane. Cys-111 and Cys-194 are disulfide-bonded. The helical transmembrane segment at Leu-113 to Ser-133 threads the bilayer. The Cytoplasmic portion of the chain corresponds to Leu-134 to Ala-156. Residues Val-157–Phe-177 traverse the membrane as a helical segment. Over Arg-178–Glu-204 the chain is Extracellular. Residues Ile-205 to Ile-225 traverse the membrane as a helical segment. Residues Ser-226–Leu-268 are Cytoplasmic-facing. The chain crosses the membrane as a helical span at residues Leu-269–Ile-289. Over Gln-290 to Asp-295 the chain is Extracellular. Residues Leu-296–Leu-316 form a helical membrane-spanning segment. At Asn-317–Gly-361 the chain is on the cytoplasmic side. Residues Thr-347 and Thr-349 each carry the phosphothreonine modification. Phosphoserine occurs at positions 350, 357, and 360.

It belongs to the G-protein coupled receptor 1 family. In terms of assembly, interacts (via C-terminus) with ARRB2 following LCFAs stimulation. In terms of processing, phosphorylated at two clusters of Ser and Thr residues located in the intracellular C-terminus, a prerequisite for FFAR4 internalization via an ARRB2-dependent pathway. As to expression, the predominant isoform in human tissues. Expressed in adipose tissue, pancreatic islets, lung and brain. Expressed in alpha cells of pancreatic islets. Expressed in primary cilia of perivascular preadipocytes of white adipose tissue (at protein level). In terms of tissue distribution, abundant expression in the intestinal tract. Expressed in colonic intraepithelial neuroendocrine cells.

It is found in the cell membrane. The protein resides in the endosome membrane. Its subcellular location is the lysosome membrane. It localises to the cell projection. The protein localises to the cilium membrane. In terms of biological role, G-protein-coupled receptor for long-chain fatty acids (LCFAs) with a major role in adipogenesis, energy metabolism and inflammation. Signals via G-protein and beta-arrestin pathways. LCFAs sensing initiates activation of phosphoinositidase C-linked G proteins GNAQ and GNA11 (G(q)/G(11)), inducing a variety of cellular responses via second messenger pathways such as intracellular calcium mobilization, modulation of cyclic adenosine monophosphate (cAMP) production, and mitogen-activated protein kinases (MAPKs). After LCFAs binding, associates with beta-arrestin ARRB2 that acts as an adapter protein coupling the receptor to specific downstream signaling pathways, as well as mediating receptor endocytosis. In response to dietary fats, plays an important role in the regulation of adipocyte proliferation and differentiation. Acts as a receptor for omega-3 polyunsaturated fatty acids (PUFAs) at primary cilium of perivascular preadipocytes, initiating an adipogenic program via cAMP and CTCF-dependent chromatin remodeling that ultimately results in transcriptional activation of adipogenic genes and cell cycle entry. Induces differentiation of brown adipocytes probably via autocrine and endocrine functions of FGF21 hormone. Activates brown adipocytes by initiating intracellular calcium signaling that leads to mitochondrial depolarization and fission, and overall increased mitochondrial respiration. Consequently stimulates fatty acid uptake and oxidation in mitochondria together with UCP1-mediated thermogenic respiration, eventually reducing fat mass. Regulates bi-potential differentiation of bone marrow mesenchymal stem cells toward osteoblasts or adipocytes likely by up-regulating distinct integrins. In response to dietary fats regulates hormone secretion and appetite. Stimulates GIP and GLP1 secretion from enteroendocrine cells as well as GCG secretion in pancreatic alpha cells, thereby playing a role in the regulation of blood glucose levels. Negatively regulates glucose-induced SST secretion in pancreatic delta cells. Mediates LCFAs inhibition of GHRL secretion, an appetite-controlling hormone. In taste buds, contributes to sensing of dietary fatty acids by the gustatory system. During the inflammatory response, promotes anti-inflammatory M2 macrophage differentiation in adipose tissue. Mediates the anti-inflammatory effects of omega-3 PUFAs via inhibition of NLRP3 inflammasome activation. In this pathway, interacts with adapter protein ARRB2 and inhibits the priming step triggered by Toll-like receptors (TLRs) at the level of TAK1 and TAB1. Further inhibits the activation step when ARRB2 directly associates with NLRP3, leading to inhibition of pro-inflammatory cytokine release. Mediates LCFAs anti-apoptotic effects. Its function is as follows. Receptor for LCFAs decoupled from G-protein signaling. May signal through beta-arrestin pathway. After LCFAs binding, associates with beta-arrestin ARRB2 that may act as an adapter protein coupling the receptor to specific downstream signaling pathways, as well as mediating receptor endocytosis. This chain is Free fatty acid receptor 4, found in Homo sapiens (Human).